Reading from the N-terminus, the 342-residue chain is Elongation factor Ts (342 aa).

An involved in Mg(2+) ion dislocation from EF-Tu region spans residues 80–83 (TDFV).

It belongs to the EF-Ts family.

Its subcellular location is the cytoplasm. Associates with the EF-Tu.GDP complex and induces the exchange of GDP to GTP. It remains bound to the aminoacyl-tRNA.EF-Tu.GTP complex up to the GTP hydrolysis stage on the ribosome. In Lactobacillus delbrueckii subsp. bulgaricus (strain ATCC 11842 / DSM 20081 / BCRC 10696 / JCM 1002 / NBRC 13953 / NCIMB 11778 / NCTC 12712 / WDCM 00102 / Lb 14), this protein is Elongation factor Ts.